A 300-amino-acid chain; its full sequence is Uricase (300 aa).

Position 2 is an N-acetylalanine (alanine 2). Lysine 6 and lysine 19 each carry N6-acetyllysine; alternate. N6-succinyllysine; alternate is present on residues lysine 6 and lysine 19. Lysine 19 acts as the Charge relay system in catalysis. Residues lysine 23 and lysine 32 each carry the N6-acetyllysine modification. A phosphoserine mark is found at serine 35 and serine 59. Catalysis depends on threonine 64, which acts as the Charge relay system. Residues threonine 64 and aspartate 65 each contribute to the urate site. N6-acetyllysine is present on residues lysine 114, lysine 118, and lysine 160. Urate is bound at residue phenylalanine 166. Lysine 171 and lysine 181 each carry N6-acetyllysine. Arginine 183 serves as a coordination point for urate. An N6-acetyllysine; alternate mark is found at lysine 217 and lysine 224. Residues lysine 217 and lysine 224 each carry the N6-succinyllysine; alternate modification. Serine 228 is subject to Phosphoserine. The urate site is built by valine 231, glutamine 232, and asparagine 258. Residue histidine 260 is the Charge relay system of the active site. Position 274 is an N6-acetyllysine (lysine 274). Tyrosine 285 carries the phosphotyrosine modification. A Microbody targeting signal motif is present at residues 298–300 (SRL).

It belongs to the uricase family.

The protein resides in the peroxisome. It catalyses the reaction urate + O2 + H2O = 5-hydroxyisourate + H2O2. It participates in purine metabolism; urate degradation; (S)-allantoin from urate: step 1/3. Functionally, catalyzes the oxidation of uric acid to 5-hydroxyisourate, which is further processed to form (S)-allantoin. This chain is Uricase (UOX), found in Oryctolagus cuniculus (Rabbit).